The following is a 240-amino-acid chain: Transmembrane protein 65 (240 aa).

The N-terminal 61 residues, 1–61 (MSRLLPLLRS…RRLGTHPKKE (61 aa)), are a transit peptide targeting the mitochondrion. The Cytoplasmic segment spans residues 62–110 (PMEALNTAQGARDFIYSLHSTERSCLLKELHRFESIAIAQEKLEAPPPT). Residues 111–131 (PGQLRYVFIHNAIPFIGFGFL) form a helical membrane-spanning segment. At 132-142 (DNAIMIVAGTH) the chain is on the extracellular side. A helical membrane pass occupies residues 143–165 (IEMSIGIILGISTMAAAALGNLV). The Cytoplasmic portion of the chain corresponds to 166 to 209 (SDLAGLGLAGYVEALASRLGLSIPDLTPKQVDMWQTRLSTHLGK). The chain crosses the membrane as a helical span at residues 210 to 230 (AVGVTIGCILGMFPLIFFGGG). Topologically, residues 231–240 (EEDEKLETKS) are extracellular.

Monomer. Homodimer. Interacts with GJA1. Interacts weakly with DSP. Interacts with SCN1B. As to expression, predominantly expressed the ventricular tissue (at protein level).

The protein localises to the cell membrane. The protein resides in the mitochondrion inner membrane. Functionally, essential for maintaining proper cardiac intercalated disk (ICD) structure and function as well as cardiac conduction velocity in the heart. Its association with SCN1B is required for stabilizing the perinexus in the ICD and for localization of GJA1 and SCN5A to the ICD. May regulate the function of the gap junction protein GJA1 and may contribute to the stability and proper localization of GJA1 to cardiac intercalated disk thereby regulating gap junction communication. May also play a role in the regulation of mitochondrial respiration and mitochondrial DNA copy number maintenance. This is Transmembrane protein 65 (TMEM65) from Homo sapiens (Human).